Here is a 213-residue protein sequence, read N- to C-terminus: StAR-related lipid transfer protein 5 (213 aa).

Residues 1–213 (MDPALAAQMS…LQKAVKQFHE (213 aa)) form the START domain.

Its function is as follows. May be involved in the intracellular transport of sterols or other lipids. May bind cholesterol or other sterols. The sequence is that of StAR-related lipid transfer protein 5 (STARD5) from Pongo abelii (Sumatran orangutan).